A 324-amino-acid chain; its full sequence is Carbonic anhydrase 15 (324 aa).

The first 18 residues, 1-18, serve as a signal peptide directing secretion; sequence MWALDFLLSFLLIQLAAQ. The 271-residue stretch at 23–293 folds into the Alpha-carbonic anhydrase domain; it reads GTWCYDSQDP…LGGRRISASP (271 aa). H90 (proton acceptor) is an active-site residue. Zn(2+) contacts are provided by H122, H124, and H147. The active site involves Y155. N-linked (GlcNAc...) asparagine glycans are attached at residues N184, N194, and N203. A substrate-binding site is contributed by 231–232; sequence TT. Residues 269-290 are disordered; it reads LHPRPLTSNFRPQQPLGGRRIS.

Belongs to the alpha-carbonic anhydrase family. It depends on Zn(2+) as a cofactor.

The protein resides in the secreted. The catalysed reaction is hydrogencarbonate + H(+) = CO2 + H2O. Its activity is regulated as follows. Repressed by coumarins. In terms of biological role, reversible hydration of carbon dioxide. This chain is Carbonic anhydrase 15 (Ca15), found in Mus musculus (Mouse).